The chain runs to 216 residues: Octanoyltransferase (216 aa).

Residues 31–205 (STTRDEVWLV…ELVTLLDYEQ (175 aa)) form the BPL/LPL catalytic domain. Residues 70–77 (RGGQVTYH), 137–139 (SLG), and 150–152 (GLA) each bind substrate. The active-site Acyl-thioester intermediate is the C168.

It belongs to the LipB family.

It localises to the cytoplasm. It catalyses the reaction octanoyl-[ACP] + L-lysyl-[protein] = N(6)-octanoyl-L-lysyl-[protein] + holo-[ACP] + H(+). It functions in the pathway protein modification; protein lipoylation via endogenous pathway; protein N(6)-(lipoyl)lysine from octanoyl-[acyl-carrier-protein]: step 1/2. Functionally, catalyzes the transfer of endogenously produced octanoic acid from octanoyl-acyl-carrier-protein onto the lipoyl domains of lipoate-dependent enzymes. Lipoyl-ACP can also act as a substrate although octanoyl-ACP is likely to be the physiological substrate. The sequence is that of Octanoyltransferase from Vibrio cholerae serotype O1 (strain ATCC 39315 / El Tor Inaba N16961).